The primary structure comprises 445 residues: 6-phosphogluconate dehydrogenase, decarboxylating (445 aa).

NADP(+) is bound by residues 1 to 4, 22 to 24, 63 to 65, and asparagine 91; these read AVMG, NRS, and VKA. Substrate contacts are provided by residues asparagine 91 and 117–119; that span reads SGG. Lysine 172 functions as the Proton acceptor in the catalytic mechanism. 175-176 contributes to the substrate binding site; sequence HN. Glutamate 179 (proton donor) is an active-site residue. Tyrosine 180, lysine 249, arginine 276, arginine 434, and histidine 440 together coordinate substrate.

It belongs to the 6-phosphogluconate dehydrogenase family. Homodimer.

It carries out the reaction 6-phospho-D-gluconate + NADP(+) = D-ribulose 5-phosphate + CO2 + NADPH. The protein operates within carbohydrate degradation; pentose phosphate pathway; D-ribulose 5-phosphate from D-glucose 6-phosphate (oxidative stage): step 3/3. In terms of biological role, catalyzes the oxidative decarboxylation of 6-phosphogluconate to ribulose 5-phosphate and CO(2), with concomitant reduction of NADP to NADPH. This is 6-phosphogluconate dehydrogenase, decarboxylating (gnd) from Shigella dysenteriae.